Here is a 355-residue protein sequence, read N- to C-terminus: MNCEREQLRGNQEAAAAPDTMAQPYASAQFAPPQNGIPAEYTAPHPHPAPEYTGQTTVPEHTLNLYPPAQSHSEQSAADTSAHTVSGTATTDDSAPTDGQPQTQPSENTENKSQPKRLHVSNIPFRFRDPDLRQMFGGFGFVTFENSADADRAREKLHGTVVEGRKIEVNNATARVMTNKKTVNPYTNGWKLNPVVGAVYSPEFYAGTVLLCQANQEGSSMYSAPSSLVYTSAMPGFPYPAATAAAAYRGAHLRGRGRTVYNTFRAAAPPPPIPAYGGVVYQDGFYGADIYGGYAAYRYAQPTPATAAAYSDRNQFVFVAADEISCNTSAVTDEFMLPTPTTTHLLQPPPTALVP.

The interval 1-123 is disordered; sequence MNCEREQLRG…QPKRLHVSNI (123 aa). The segment covering 70–112 has biased composition (polar residues); the sequence is QSHSEQSAADTSAHTVSGTATTDDSAPTDGQPQTQPSENTENK. The 59-residue stretch at 116 to 174 folds into the RRM domain; sequence KRLHVSNIPFRFRDPDLRQMFGGFGFVTFENSADADRAREKLHGTVVEGRKIEVNNATA. Arg-298 carries the post-translational modification Asymmetric dimethylarginine.

In terms of assembly, binds to the C-terminus of ATXN2.

It is found in the nucleus. The protein resides in the cytoplasm. RNA-binding protein that regulates alternative splicing events by binding to 5'-UGCAUGU-3' elements. Prevents binding of U2AF2 to the 3'-splice site. Regulates alternative splicing of tissue-specific exons and of differentially spliced exons during erythropoiesis. This chain is RNA binding protein fox-1 homolog 1 (RBFOX1), found in Bos taurus (Bovine).